The sequence spans 223 residues: All-trans retinoic acid-induced differentiation factor (223 aa).

An N-terminal signal peptide occupies residues 1–25; sequence MASRESGGSRAAALLLVLGVERALA. Residues 26 to 193 lie on the Extracellular side of the membrane; it reads LPEICTLCPG…YKCMRQGSFS (168 aa). An EGF-like domain is found at 146-187; it reads QRDLCNSTGSPEMCPENGSCASDGPGLLQCVCADGFHGYKCM. 3 cysteine pairs are disulfide-bonded: cysteine 150-cysteine 165, cysteine 159-cysteine 175, and cysteine 177-cysteine 186. The helical transmembrane segment at 194–214 threads the bilayer; it reads LLMFFGILGSTTLAISILLWG. Over 215–223 the chain is Cytoplasmic; it reads TQRRKAKAS.

Interacts with NELL1; the interaction promotes osteoblastic differentiation and mineralization. Interacts with SLC37A3; the interaction is direct and both proteins are mutually dependent for their stability.

It is found in the nucleus envelope. Its subcellular location is the cell membrane. The protein resides in the lysosome membrane. Functionally, promotes osteoblast cell differentiation and terminal mineralization. Plays a role in inducing the cell cycle arrest via inhibiting CCND1 expression in all-trans-retinoic acid (ATRA) signal pathway. In osteoclasts, forms a transporter complex with ATRAID for nitrogen-containing-bisphophonates (N-BPs) required for releasing N-BP molecules that have trafficked to lysosomes through fluid-phase endocytosis into the cytosol. In Mus musculus (Mouse), this protein is All-trans retinoic acid-induced differentiation factor (Atraid).